Consider the following 256-residue polypeptide: Myb family transcription factor MPH1 (256 aa).

Positions 14–74 (RSEVPRMRWT…HLQMYRSGSS (61 aa)) constitute an HTH myb-type domain. A DNA-binding region (H-T-H motif) is located at residues 45 to 70 (PKRILQLMGVKGVSISHIKSHLQMYR).

As to expression, highly expressed in the pulvinus and stem nodes. Expressed in the plumule of germinating seeds, coleoptile, leaves, internodes, leave sheaths, spikes and roots.

It is found in the nucleus. Probable transcription factor involved in the regulation of plant height by elongating internode cell length. Involved in the positive regulation of grain yield. May be involved in the regulation of genes related to cell elongation and cell wall synthesis, which are associated with plant height and yield phenotypes. Plays a role in tolerance to cadmium stress. In Oryza sativa subsp. japonica (Rice), this protein is Myb family transcription factor MPH1.